A 593-amino-acid chain; its full sequence is Transcriptional repressor p66-beta (593 aa).

Residue Ser17 is modified to Phosphoserine. Residues Lys33, Lys66, and Lys97 each participate in a glycyl lysine isopeptide (Lys-Gly) (interchain with G-Cter in SUMO2) cross-link. The tract at residues 62 to 123 (ELPTKQDGSG…PERGRLTPSP (62 aa)) is disordered. Basic and acidic residues-rich tracts occupy residues 74–100 (GYEEKLNGNLRPHGDNRTAGRPGKENI) and 108–118 (SARRSEPERGR). Phosphothreonine is present on Thr120. Residues Ser122, Ser129, Ser134, and Ser135 each carry the phosphoserine modification. Residues 140–194 (SRMEERLKAANLEMFKGKGIEERQQLIKQLRDELRLEEARLVLLKKLRQSQLQKE) are a coiled coil. Residue Lys147 forms a Glycyl lysine isopeptide (Lys-Gly) (interchain with G-Cter in SUMO2) linkage. The interval 165–195 (LIKQLRDELRLEEARLVLLKKLRQSQLQKEN) is CR1; interaction with MBD2 and MBD3. A Glycyl lysine isopeptide (Lys-Gly) (interchain with G-Cter in SUMO2) cross-link involves residue Lys199. Ser208 is modified (phosphoserine). The interval 213-235 (SPAHVGQQGLSKLPSRPGAQGVE) is disordered. Lys281 participates in a covalent cross-link: Glycyl lysine isopeptide (Lys-Gly) (interchain with G-Cter in SUMO2). A phosphoserine mark is found at Ser333, Ser338, and Ser340. Residues 340–480 (SAMTDAANSQ…QEQEIEQRLQ (141 aa)) are CR2; histone tail-binding. Residues Lys353, Lys454, and Lys467 each participate in a glycyl lysine isopeptide (Lys-Gly) (interchain with G-Cter in SUMO2) cross-link. A GATA-type zinc finger spans residues 414-467 (RVEPFVCAQCRTDFTPHWKQEKNGKILCEQCMTSNQKKALKAEHTNRLKNAFVK). A coiled-coil region spans residues 449-482 (QKKALKAEHTNRLKNAFVKALQQEQEIEQRLQQQ). Position 486 is a phosphoserine (Ser486). A Glycyl lysine isopeptide (Lys-Gly) (interchain with G-Cter in SUMO2) cross-link involves residue Lys498.

As to quaternary structure, homooligomer. Component of the nucleosome remodeling and deacetylase (NuRD) repressor complex, composed of core proteins MTA1, MTA2, MTA3, RBBP4, RBBP7, HDAC1, HDAC2, MBD2, MBD3, and peripherally associated proteins CDK2AP1, CDK2AP2, GATAD2A, GATAD2B, CHD3, CHD4 and CHD5. The exact stoichiometry of the NuRD complex is unknown, and some subunits such as MBD2 and MBD3, GATAD2A and GATAD2B, and CHD3, CHD4 and CHD5 define mutually exclusive NuRD complexes. Interacts with MBD2; this is required for the enhancement of MBD2-mediated repression and for targeting to the chromatin. Interacts with MBD3. Component of the MeCP1 histone deacetylase complex. Interacts with histone tails, including that of histones H2A, H2B, H3 and H4. Interacts with ERCC6. In terms of tissue distribution, widely expressed.

The protein resides in the nucleus speckle. It is found in the nucleus. The protein localises to the chromosome. Functionally, transcriptional repressor. Acts as a component of the histone deacetylase NuRD complex which participates in the remodeling of chromatin. Enhances MBD2-mediated repression. Efficient repression requires the presence of GATAD2A. Targets MBD3 to discrete loci in the nucleus. May play a role in synapse development. This chain is Transcriptional repressor p66-beta (GATAD2B), found in Homo sapiens (Human).